The chain runs to 393 residues: Serpin-Z4 (393 aa).

The interval 342–366 (GTEAAAVSVASMTKDMLLMGDFVAD) is RCL.

This sequence belongs to the serpin family.

Its function is as follows. Probable serine protease inhibitor. The polypeptide is Serpin-Z4 (Arabidopsis thaliana (Mouse-ear cress)).